The primary structure comprises 196 residues: Holliday junction branch migration complex subunit RuvA (196 aa).

Positions 1–63 (MYDYIKGKLS…DDAHLLFGFH (63 aa)) are domain I. The segment at 64 to 142 (TENEKEIFLN…EASGESATSR (79 aa)) is domain II. The flexible linker stretch occupies residues 143-148 (KVSSEQ). The segment at 148 to 196 (QNSNLEEAMEALLALGYKATELKKVKAFFEGTNETVEQYIKSSLKMLMK) is domain III.

The protein belongs to the RuvA family. As to quaternary structure, homotetramer. Forms an RuvA(8)-RuvB(12)-Holliday junction (HJ) complex. HJ DNA is sandwiched between 2 RuvA tetramers; dsDNA enters through RuvA and exits via RuvB. An RuvB hexamer assembles on each DNA strand where it exits the tetramer. Each RuvB hexamer is contacted by two RuvA subunits (via domain III) on 2 adjacent RuvB subunits; this complex drives branch migration. In the full resolvosome a probable DNA-RuvA(4)-RuvB(12)-RuvC(2) complex forms which resolves the HJ.

It is found in the cytoplasm. Its function is as follows. The RuvA-RuvB-RuvC complex processes Holliday junction (HJ) DNA during genetic recombination and DNA repair, while the RuvA-RuvB complex plays an important role in the rescue of blocked DNA replication forks via replication fork reversal (RFR). RuvA specifically binds to HJ cruciform DNA, conferring on it an open structure. The RuvB hexamer acts as an ATP-dependent pump, pulling dsDNA into and through the RuvAB complex. HJ branch migration allows RuvC to scan DNA until it finds its consensus sequence, where it cleaves and resolves the cruciform DNA. This is Holliday junction branch migration complex subunit RuvA from Streptococcus agalactiae serotype III (strain NEM316).